Consider the following 61-residue polypeptide: Photosystem II reaction center protein K (61 aa).

A propeptide spanning residues 1–24 (MLNIFNLVCICIHSVLYSSSFFSA) is cleaved from the precursor. Residues 36–56 (IVDIMPVIPLLFFLLAFVWQA) traverse the membrane as a helical segment.

The protein belongs to the PsbK family. PSII is composed of 1 copy each of membrane proteins PsbA, PsbB, PsbC, PsbD, PsbE, PsbF, PsbH, PsbI, PsbJ, PsbK, PsbL, PsbM, PsbT, PsbX, PsbY, PsbZ, Psb30/Ycf12, at least 3 peripheral proteins of the oxygen-evolving complex and a large number of cofactors. It forms dimeric complexes.

The protein resides in the plastid. It localises to the chloroplast thylakoid membrane. Its function is as follows. One of the components of the core complex of photosystem II (PSII). PSII is a light-driven water:plastoquinone oxidoreductase that uses light energy to abstract electrons from H(2)O, generating O(2) and a proton gradient subsequently used for ATP formation. It consists of a core antenna complex that captures photons, and an electron transfer chain that converts photonic excitation into a charge separation. In Glycine max (Soybean), this protein is Photosystem II reaction center protein K.